A 494-amino-acid polypeptide reads, in one-letter code: MSEWTKEQRYQKYEDVDQQTIEKLTEQVNQSEYRQTFHIQPQIGLLNDPNGLIYFKGNYYVSHQWFPLGPVHGLKYWYTYQSKDLVDFKAIGPTIKPDTKDDSHGVYSGSAFEYHDHLYYMYTANHRDSDWNRISTQHIAKMSKDGSINKFPKAVISAPPSGYTQHFRDPKVHVQDGVYYAMIAAQNIKKQGRILQYRSTDIVNWEFQGEVQTNLDDFGYMWECPDYFNLNGYDMLLFCPQGIDSEGERFKNIYQSGYIMGQYDINNLTMNHADFHELDYGFDFYAPQTFLDENGQRILIGWMGLPDINYPSDADGWAHCLTIPRVLTIESGNLKQRPIKALEKLRTNEETALGYANKFTRQLHPYEGKQFELIIDILENEATEVYFEVRTSKTESTLITYNKREQKLTLDRSESGQLPEPVEGTTRSTYLDTPLSKLQLFVDTSSVEIFCNDGERVMTARIFTDENATGIKTSTESGQTYLKFTKYDLKGDTI.

Substrate is bound by residues 45–48 (LLND), glutamine 64, 107–108 (YS), 168–169 (RD), and glutamate 223. Aspartate 48 is a catalytic residue.

The protein belongs to the glycosyl hydrolase 32 family.

It carries out the reaction Hydrolysis of terminal non-reducing beta-D-fructofuranoside residues in beta-D-fructofuranosides.. It participates in glycan biosynthesis; sucrose metabolism. This is Sucrose-6-phosphate hydrolase (scrB) from Staphylococcus xylosus.